The following is a 373-amino-acid chain: tRNA-specific 2-thiouridylase MnmA (373 aa).

ATP-binding positions include 12–19 (GMSGGVDS) and methionine 38. An interaction with target base in tRNA region spans residues 98–100 (NPD). Cysteine 103 functions as the Nucleophile in the catalytic mechanism. An intrachain disulfide couples cysteine 103 to cysteine 200. Glycine 128 is a binding site for ATP. Positions 150–152 (KDQ) are interaction with tRNA. Residue cysteine 200 is the Cysteine persulfide intermediate of the active site. Positions 312-313 (RY) are interaction with tRNA.

It belongs to the MnmA/TRMU family. As to quaternary structure, interacts with TusE.

It is found in the cytoplasm. The catalysed reaction is S-sulfanyl-L-cysteinyl-[protein] + uridine(34) in tRNA + AH2 + ATP = 2-thiouridine(34) in tRNA + L-cysteinyl-[protein] + A + AMP + diphosphate + H(+). Catalyzes the 2-thiolation of uridine at the wobble position (U34) of tRNA(Lys), tRNA(Glu) and tRNA(Gln), leading to the formation of s(2)U34, the first step of tRNA-mnm(5)s(2)U34 synthesis. Sulfur is provided by IscS, via a sulfur-relay system. Binds ATP and its substrate tRNAs. The protein is tRNA-specific 2-thiouridylase MnmA of Yersinia enterocolitica serotype O:8 / biotype 1B (strain NCTC 13174 / 8081).